The primary structure comprises 158 residues: MRPPMTLKGVRRLRDELEHLKLVKRPEIINAIAEARAHGDLKENAEYHAAREQQSFIEGRIKQLEGELSHAEVIDVAKLNAGTKIVFGATVTLADLGTDEESRYQIVGDLEADIKQGLVAISSPVARALIGKQEGDTIVIEAPAGRREYEVVAVEYIS.

The stretch at 45-72 forms a coiled coil; the sequence is AEYHAAREQQSFIEGRIKQLEGELSHAE.

This sequence belongs to the GreA/GreB family.

Functionally, necessary for efficient RNA polymerase transcription elongation past template-encoded arresting sites. The arresting sites in DNA have the property of trapping a certain fraction of elongating RNA polymerases that pass through, resulting in locked ternary complexes. Cleavage of the nascent transcript by cleavage factors such as GreA or GreB allows the resumption of elongation from the new 3'terminus. GreA releases sequences of 2 to 3 nucleotides. The protein is Transcription elongation factor GreA of Xylella fastidiosa (strain M12).